Reading from the N-terminus, the 563-residue chain is 4-hydroxy-7-methoxy-3-oxo-3,4-dihydro-2H-1,4-benzoxazin-2-yl glucoside beta-D-glucosidase 2, chloroplastic (563 aa).

The N-terminal 51 residues, 1 to 51 (MAPLLAAAMNHAAHPVLRSHLGPNNESFSRHHLSSSPQSSKRRFNLSFTPR), are a transit peptide targeting the chloroplast. Positions 17 to 43 (LRSHLGPNNESFSRHHLSSSPQSSKRR) are disordered. A beta-D-glucoside is bound by residues Gln-89, His-193, and 241 to 242 (NE). The Proton donor role is filled by Glu-242. Cys-261 and Cys-267 are oxidised to a cystine. The tract at residues 322-358 (SFLDEQAKERSMDINLGWFLEPVVRGDYPFSMRSLAR) is dimerization. An a beta-D-glucoside-binding site is contributed by Tyr-384. Dimerization regions lie at residues 391 to 402 (HIDISPKYSPVL) and 447 to 450 (KYGN). A beta-D-glucoside contacts are provided by residues Glu-457, Trp-508, 515 to 516 (EW), and Tyr-524. The active-site Nucleophile is Glu-457.

It belongs to the glycosyl hydrolase 1 family. In terms of assembly, homo- and heterodimer. As to expression, expressed in leaves only starting at day 6 after germination.

It is found in the plastid. The protein localises to the chloroplast. It carries out the reaction Hydrolysis of terminal, non-reducing beta-D-glucosyl residues with release of beta-D-glucose.. The enzyme catalyses DIMBOA beta-D-glucoside + H2O = DIMBOA + D-glucose. It catalyses the reaction DIBOA beta-D-glucoside + H2O = DIBOA + D-glucose. Its function is as follows. Beta-glucosidase acting poorly on artificial aryl beta-glucosides. Has no activity toward the chromogenic substrate 6-bromo-2-naphthyl-beta-D-glucoside (6BNGlc). The chain is 4-hydroxy-7-methoxy-3-oxo-3,4-dihydro-2H-1,4-benzoxazin-2-yl glucoside beta-D-glucosidase 2, chloroplastic (GLU2) from Zea mays (Maize).